Here is a 490-residue protein sequence, read N- to C-terminus: MLDTLVPGAPVLVAGGGVTGRAVLAALTRFGMAATLCDDDPAALQQYADNGVATVSAATATQQMFERGRKYVLVVTSPGFAPTTPVLVAASAARVPIWGDVELAWRLDAAGYYGPPRRWLVVTGTNGKTTTTSMLHAMLAADNRRSLLCGNIGRPVLDVLTEFAEPSDFLAVELSSFQLHWAPSLRPEAGVVLNIAEDHLDWHSTMADYTMAKARVLTGRVAVVGLDDSRAAALLSTTVAPVRVGFRFGEPAVGELGVRDGYLVDRAFAEDLALMPVTSIPVSGPVGVLDALAAAALARSVGVGATAIADAVALFRLGRHRAEVVAVADGIRYVDDSKATNPHAALVSVLAYPRVVWVAGGLLKGASVDAEVARMAPQLVGAVLIGRDRAMVAEALSRHAPNVPVVQVVAGEDAGMHAVAVVSGTDVISISDVGGTIGTRVMVAAVAAARDLAQPGDTVLLAPAGASFDQFSGYADRGDTFATAVRAAIR.

124–130 (GTNGKTT) serves as a coordination point for ATP.

It belongs to the MurCDEF family.

Its subcellular location is the cytoplasm. It carries out the reaction UDP-N-acetyl-alpha-D-muramoyl-L-alanine + D-glutamate + ATP = UDP-N-acetyl-alpha-D-muramoyl-L-alanyl-D-glutamate + ADP + phosphate + H(+). It functions in the pathway cell wall biogenesis; peptidoglycan biosynthesis. In terms of biological role, cell wall formation. Catalyzes the addition of glutamate to the nucleotide precursor UDP-N-acetylmuramoyl-L-alanine (UMA). This is UDP-N-acetylmuramoylalanine--D-glutamate ligase (murD) from Mycobacterium leprae (strain TN).